Consider the following 438-residue polypeptide: Glutamyl-tRNA(Gln) amidotransferase subunit D (438 aa).

The Asparaginase/glutaminase domain maps to 92–422 (PEVTIIGTGG…EEVRKMMLTN (331 aa)). Active-site residues include Thr-102, Thr-178, Asp-179, and Lys-256.

Belongs to the asparaginase 1 family. GatD subfamily. As to quaternary structure, heterodimer of GatD and GatE.

The enzyme catalyses L-glutamyl-tRNA(Gln) + L-glutamine + ATP + H2O = L-glutaminyl-tRNA(Gln) + L-glutamate + ADP + phosphate + H(+). Functionally, allows the formation of correctly charged Gln-tRNA(Gln) through the transamidation of misacylated Glu-tRNA(Gln) in organisms which lack glutaminyl-tRNA synthetase. The reaction takes place in the presence of glutamine and ATP through an activated gamma-phospho-Glu-tRNA(Gln). The GatDE system is specific for glutamate and does not act on aspartate. This is Glutamyl-tRNA(Gln) amidotransferase subunit D from Pyrococcus abyssi (strain GE5 / Orsay).